The following is a 222-amino-acid chain: Peptidyl-prolyl cis-trans isomerase FKBP7 (222 aa).

The N-terminal stretch at 1-23 is a signal peptide; sequence MPKTMHFLFRFIVFFYLWGLFTA. N-linked (GlcNAc...) asparagine glycosylation is present at N45. The PPIase FKBP-type domain maps to 53–145; it reads GDLLNAHYDG…IFEIELYAVT (93 aa). EF-hand domains follow at residues 145–180 and 189–222; these read TKGP…EFEK and YQDA…HDEL. Residues D158, D160, D162, Q164, E169, D202, D204, D206, and E213 each coordinate Ca(2+). The interval 200-222 is disordered; it reads KNDHDGDGFISPKEYNVYQHDEL. Residues 219–222 carry the Retention in the endoplasmic reticulum motif; the sequence is HDEL.

Glycosylated.

The protein resides in the endoplasmic reticulum lumen. The catalysed reaction is [protein]-peptidylproline (omega=180) = [protein]-peptidylproline (omega=0). Its function is as follows. PPIases accelerate the folding of proteins during protein synthesis. The protein is Peptidyl-prolyl cis-trans isomerase FKBP7 (FKBP7) of Homo sapiens (Human).